Consider the following 82-residue polypeptide: Small ribosomal subunit protein uS17 (82 aa).

This sequence belongs to the universal ribosomal protein uS17 family. As to quaternary structure, part of the 30S ribosomal subunit.

One of the primary rRNA binding proteins, it binds specifically to the 5'-end of 16S ribosomal RNA. The sequence is that of Small ribosomal subunit protein uS17 from Tolumonas auensis (strain DSM 9187 / NBRC 110442 / TA 4).